An 804-amino-acid polypeptide reads, in one-letter code: DEP domain-containing protein 1A (804 aa).

In terms of domain architecture, DEP spans 24-108 (FRVGMPLRKH…DNNQLFRFPA (85 aa)). The Rho-GAP domain occupies 282 to 322 (DYFLNLPEPLLTFEYYELFVNILVVCGYITVSDRTSGIHKI). Phosphoserine is present on serine 513. Residues 592–647 (AINALQLCCLLLPPPNRRKLQLLMRMISRMSQNVDMPKLHEQIGTRSLMINTFSRC) form an interaction with ZNF224 region. Positions 726-760 (EQKISTSQAAIAELLENIVRSKSLSLKEKRRKLKQ) form a coiled coil.

Can form dimers. Interacts with ZNF224.

The protein localises to the nucleus. In terms of biological role, may be involved in transcriptional regulation as a transcriptional corepressor. The DEPDC1A-ZNF224 complex may play a critical role in bladder carcinogenesis by repressing the transcription of the A20 gene, leading to transport of NF-KB protein into the nucleus, resulting in suppression of apoptosis of bladder cancer cells. This is DEP domain-containing protein 1A (Depdc1a) from Mus musculus (Mouse).